The following is a 561-amino-acid chain: Bifunctional NAD(P)H-hydrate repair enzyme (561 aa).

The tract at residues 1–241 (MLSRISERCT…WMIAAERMDA (241 aa)) is NAD(P)H-hydrate epimerase. A YjeF N-terminal domain is found at 29-235 (LRDAEPAAAA…SLGLEEWMIA (207 aa)). Positions 77 to 81 (NNGGD) are NADPHX 1; for epimerase activity. Residues N78 and D145 each contribute to the K(+) site. The tract at residues 149 to 155 (GTGISGP) is NADPHX 1; for epimerase activity. Residues Y160 and D178 each coordinate (6S)-NADPHX. Residue S181 participates in K(+) binding. Positions 249 to 548 (LGDVYGYFST…PRIPFIVNAS (300 aa)) constitute a YjeF C-terminal domain. Residues 249-561 (LGDVYGYFST…SATQQRPSGL (313 aa)) form an ADP-dependent (S)-NAD(P)H-hydrate dehydratase region. G351 serves as a coordination point for (6S)-NADPHX. The NADPHX 2; for dehydratase activity stretch occupies residues 417–423 (HPGEAAR). ADP is bound by residues 454–458 (KGPGT) and 475–484 (NAGMASGGMG). Position 485 (D485) interacts with (6S)-NADPHX.

The protein in the N-terminal section; belongs to the NnrE/AIBP family. It in the C-terminal section; belongs to the NnrD/CARKD family. The cofactor is K(+).

It catalyses the reaction (6S)-NADHX + ADP = AMP + phosphate + NADH + H(+). It carries out the reaction (6S)-NADPHX + ADP = AMP + phosphate + NADPH + H(+). The enzyme catalyses (6R)-NADHX = (6S)-NADHX. The catalysed reaction is (6R)-NADPHX = (6S)-NADPHX. Functionally, bifunctional enzyme that catalyzes the epimerization of the S- and R-forms of NAD(P)HX and the dehydration of the S-form of NAD(P)HX at the expense of ADP, which is converted to AMP. This allows the repair of both epimers of NAD(P)HX, a damaged form of NAD(P)H that is a result of enzymatic or heat-dependent hydration. This Leishmania braziliensis protein is Bifunctional NAD(P)H-hydrate repair enzyme.